The sequence spans 300 residues: Protein TRACHEARY ELEMENT DIFFERENTIATION-RELATED 7A (300 aa).

The interval 1–181 (MASPLSQSVF…HIIPPPPPSP (181 aa)) is disordered. Over 1-187 (MASPLSQSVF…PPSPSNHSTT (187 aa)) the chain is Extracellular. The span at 12 to 181 (HFPPPSPAAT…HIIPPPPPSP (170 aa)) shows a compositional bias: pro residues. An N-linked (GlcNAc...) asparagine glycan is attached at Asn-183. Residues 188–208 (IVVIFVSCGGVFFLAFAMAAL) traverse the membrane as a helical segment. Over 209-300 (WCFLKKKKKK…SSFGHHYLHG (92 aa)) the chain is Cytoplasmic.

Accumulates in cells differentiating into tracheary element (TE) which undergo secondary cell wall (SCW) formation.

The protein resides in the cell membrane. Its subcellular location is the secreted. It is found in the cell wall. Functionally, involved in the secondary cell wall (SCW) formation of vessel elements (e.g. protoxylem and metaxylem), thus promoting tracheary element (TE) differentiation. This chain is Protein TRACHEARY ELEMENT DIFFERENTIATION-RELATED 7A, found in Zinnia elegans (Garden zinnia).